Consider the following 628-residue polypeptide: Biosynthetic arginine decarboxylase (628 aa).

Lys-99 is modified (N6-(pyridoxal phosphate)lysine). 279–289 (VDVGGGLGIDY) provides a ligand contact to substrate.

This sequence belongs to the Orn/Lys/Arg decarboxylase class-II family. SpeA subfamily. It depends on Mg(2+) as a cofactor. The cofactor is pyridoxal 5'-phosphate.

The enzyme catalyses L-arginine + H(+) = agmatine + CO2. It functions in the pathway amine and polyamine biosynthesis; agmatine biosynthesis; agmatine from L-arginine: step 1/1. In terms of biological role, catalyzes the biosynthesis of agmatine from arginine. The protein is Biosynthetic arginine decarboxylase of Xylella fastidiosa (strain M23).